A 423-amino-acid polypeptide reads, in one-letter code: Large ribosomal subunit protein mL37 (423 aa).

The transit peptide at 1-29 (MALASGPARRVLARPWGLGLEGCGVPRRG) directs the protein to the mitochondrion.

This sequence belongs to the mitochondrion-specific ribosomal protein mL37 family. In terms of assembly, component of the mitochondrial ribosome large subunit (39S) which comprises a 16S rRNA and about 50 distinct proteins.

It localises to the mitochondrion. This is Large ribosomal subunit protein mL37 (MRPL37) from Bos taurus (Bovine).